We begin with the raw amino-acid sequence, 495 residues long: Internal alternative NAD(P)H-ubiquinone oxidoreductase A1, mitochondrial (495 aa).

A mitochondrion-targeting transit peptide spans 1–41 (MPWFKNLIKISKTITNQSSSYKSITPLASPLLAQFLQFTKQ). Residue 61–91 (RIVVLGSGWAGCRLMKDIDTNIYDVVCVSPR) participates in FAD binding. 228–264 (LHCVVVGGGPTGVEFSGELSDFILKDVHQRYAHVKDY) provides a ligand contact to NAD(+). The short motif at 486 to 495 (LVFGRDISRI) is the Microbody targeting signal element.

This sequence belongs to the NADH dehydrogenase family. The cofactor is FAD.

Its subcellular location is the mitochondrion inner membrane. The protein localises to the peroxisome. It catalyses the reaction a quinone + NADH + H(+) = a quinol + NAD(+). The enzyme catalyses a ubiquinone + NADH + H(+) = a ubiquinol + NAD(+). In terms of biological role, alternative NADH-ubiquinone oxidoreductase which catalyzes the oxidation of mitochondrial NADH does not translocate protons across the inner mitochondrial membrane. The chain is Internal alternative NAD(P)H-ubiquinone oxidoreductase A1, mitochondrial (NDA1) from Solanum tuberosum (Potato).